We begin with the raw amino-acid sequence, 184 residues long: UPF0398 protein BALH_1408 (184 aa).

It belongs to the UPF0398 family.

This is UPF0398 protein BALH_1408 from Bacillus thuringiensis (strain Al Hakam).